We begin with the raw amino-acid sequence, 406 residues long: Phosphatidylserine decarboxylase proenzyme, mitochondrial (406 aa).

A mitochondrion-targeting transit peptide spans 1-49; sequence MAVAGGRGCVRSLREGVLWRSSPCHCDYTATRHFLGALQKLPLQAWVRK. Topologically, residues 50 to 60 are mitochondrial matrix; sequence VHTAPLRTLFL. A helical membrane pass occupies residues 61–79; sequence LRPVPILLAAGGGYAGYRQ. Over 80–406 the chain is Mitochondrial intermembrane; that stretch reads YEKYRERQLE…ILFGEALGSL (327 aa). Residues Asp188, His264, and Ser375 each act as charge relay system; for autoendoproteolytic cleavage activity in the active site. Ser375 (schiff-base intermediate with substrate; via pyruvic acid; for decarboxylase activity) is an active-site residue. Ser375 is subject to Pyruvic acid (Ser); by autocatalysis.

The protein belongs to the phosphatidylserine decarboxylase family. PSD-B subfamily. Eukaryotic type I sub-subfamily. Heterodimer of a large membrane-associated beta subunit and a small pyruvoyl-containing alpha subunit. The cofactor is pyruvate. Is synthesized initially as an inactive proenzyme. Formation of the active enzyme involves a self-maturation process in which the active site pyruvoyl group is generated from an internal serine residue via an autocatalytic post-translational modification. Two non-identical subunits are generated from the proenzyme in this reaction, and the pyruvate is formed at the N-terminus of the alpha chain, which is derived from the carboxyl end of the proenzyme. The autoendoproteolytic cleavage occurs by a canonical serine protease mechanism, in which the side chain hydroxyl group of the serine supplies its oxygen atom to form the C-terminus of the beta chain, while the remainder of the serine residue undergoes an oxidative deamination to produce ammonia and the pyruvoyl prosthetic group on the alpha chain. During this reaction, the Ser that is part of the protease active site of the proenzyme becomes the pyruvoyl prosthetic group, which constitutes an essential element of the active site of the mature decarboxylase.

It is found in the mitochondrion inner membrane. Its subcellular location is the cytoplasm. It localises to the lipid droplet. It catalyses the reaction a 1,2-diacyl-sn-glycero-3-phospho-L-serine + H(+) = a 1,2-diacyl-sn-glycero-3-phosphoethanolamine + CO2. It participates in phospholipid metabolism; phosphatidylethanolamine biosynthesis. Its activity is regulated as follows. Inhibited by hydroxylamine. Catalyzes the formation of phosphatidylethanolamine (PtdEtn) from phosphatidylserine (PtdSer). Plays a central role in phospholipid metabolism and in the interorganelle trafficking of phosphatidylserine. May be involved in lipid droplet biogenesis at the endoplasmic reticulum membrane. This chain is Phosphatidylserine decarboxylase proenzyme, mitochondrial, found in Rattus norvegicus (Rat).